The following is a 327-amino-acid chain: Pyruvate dehydrogenase E1 component subunit beta (327 aa).

Residue Glu-60 coordinates thiamine diphosphate. K(+)-binding residues include Ile-113, Ala-161, Ile-162, and Asn-166.

As to quaternary structure, heterodimer of an alpha and a beta chain. It depends on thiamine diphosphate as a cofactor.

It is found in the plastid. It localises to the chloroplast. The catalysed reaction is N(6)-[(R)-lipoyl]-L-lysyl-[protein] + pyruvate + H(+) = N(6)-[(R)-S(8)-acetyldihydrolipoyl]-L-lysyl-[protein] + CO2. Functionally, the pyruvate dehydrogenase complex catalyzes the overall conversion of pyruvate to acetyl-CoA and CO(2). It contains multiple copies of three enzymatic components: pyruvate dehydrogenase (E1), dihydrolipoamide acetyltransferase (E2) and lipoamide dehydrogenase (E3). This is Pyruvate dehydrogenase E1 component subunit beta (pdhB) from Mesostigma viride (Green alga).